The chain runs to 189 residues: Holliday junction branch migration complex subunit RuvA (189 aa).

The tract at residues 1–63 is domain I; it reads MIYAMYGVLE…DDEISLYGFS (63 aa). Residues 64-135 are domain II; the sequence is DVLKLKLFEK…ELKDSMKEFD (72 aa). The flexible linker stretch occupies residues 135 to 139; the sequence is DVTLT. Residues 140–189 are domain III; sequence EKDKKILEAIEALVTLGFSRNQSKKAVTQILKKDDSLDDIIKKALKFLSR.

It belongs to the RuvA family. In terms of assembly, homotetramer. Forms an RuvA(8)-RuvB(12)-Holliday junction (HJ) complex. HJ DNA is sandwiched between 2 RuvA tetramers; dsDNA enters through RuvA and exits via RuvB. An RuvB hexamer assembles on each DNA strand where it exits the tetramer. Each RuvB hexamer is contacted by two RuvA subunits (via domain III) on 2 adjacent RuvB subunits; this complex drives branch migration. In the full resolvosome a probable DNA-RuvA(4)-RuvB(12)-RuvC(2) complex forms which resolves the HJ.

It is found in the cytoplasm. In terms of biological role, the RuvA-RuvB-RuvC complex processes Holliday junction (HJ) DNA during genetic recombination and DNA repair, while the RuvA-RuvB complex plays an important role in the rescue of blocked DNA replication forks via replication fork reversal (RFR). RuvA specifically binds to HJ cruciform DNA, conferring on it an open structure. The RuvB hexamer acts as an ATP-dependent pump, pulling dsDNA into and through the RuvAB complex. HJ branch migration allows RuvC to scan DNA until it finds its consensus sequence, where it cleaves and resolves the cruciform DNA. This is Holliday junction branch migration complex subunit RuvA from Thermosipho melanesiensis (strain DSM 12029 / CIP 104789 / BI429).